The chain runs to 232 residues: MTATKMNAQEIIQFIANAEKKTSVKVTFEGQLATAVPSSVVKLGNVLFGDWKDVAPLLEGLVENQDYVVEQDARNSAVPLLDKRAINARIEPGAIIRDQVEIGDNAVIMMGAVINIGAEIGAGTMIDMGAILGGRAIVGKNSHVGAGAVLAGVIEPASAEPVRVGDNVLIGANAVVIEGVQIGSGSVVAAGAIVTQDVPENVVVAGVPARIIKEIDAQTQQKTALEDALRTL.

The protein belongs to the transferase hexapeptide repeat family. DapH subfamily.

The enzyme catalyses (S)-2,3,4,5-tetrahydrodipicolinate + acetyl-CoA + H2O = L-2-acetamido-6-oxoheptanedioate + CoA. The protein operates within amino-acid biosynthesis; L-lysine biosynthesis via DAP pathway; LL-2,6-diaminopimelate from (S)-tetrahydrodipicolinate (acetylase route): step 1/3. Catalyzes the transfer of an acetyl group from acetyl-CoA to tetrahydrodipicolinate. The sequence is that of 2,3,4,5-tetrahydropyridine-2,6-dicarboxylate N-acetyltransferase from Streptococcus pneumoniae serotype 2 (strain D39 / NCTC 7466).